Here is a 145-residue protein sequence, read N- to C-terminus: uncharacterized protein (145 aa).

Residues 46 to 66 (FFFLFFLFFFFFFTFQFLVAF) traverse the membrane as a helical segment.

It localises to the membrane. This is an uncharacterized protein from Saccharomyces cerevisiae (strain ATCC 204508 / S288c) (Baker's yeast).